A 354-amino-acid polypeptide reads, in one-letter code: Elongation factor Ts (354 aa).

Residues 81 to 84 (TDFV) are involved in Mg(2+) ion dislocation from EF-Tu.

This sequence belongs to the EF-Ts family.

It is found in the cytoplasm. In terms of biological role, associates with the EF-Tu.GDP complex and induces the exchange of GDP to GTP. It remains bound to the aminoacyl-tRNA.EF-Tu.GTP complex up to the GTP hydrolysis stage on the ribosome. The polypeptide is Elongation factor Ts (Campylobacter concisus (strain 13826)).